The sequence spans 551 residues: Chaperonin GroEL (551 aa).

Residues 30 to 33 (TLGP), K51, 87 to 91 (DGTTT), G415, 481 to 483 (NAA), and D497 contribute to the ATP site.

It belongs to the chaperonin (HSP60) family. As to quaternary structure, forms a cylinder of 14 subunits composed of two heptameric rings stacked back-to-back. Interacts with the co-chaperonin GroES.

The protein localises to the cytoplasm. The catalysed reaction is ATP + H2O + a folded polypeptide = ADP + phosphate + an unfolded polypeptide.. Its function is as follows. Together with its co-chaperonin GroES, plays an essential role in assisting protein folding. The GroEL-GroES system forms a nano-cage that allows encapsulation of the non-native substrate proteins and provides a physical environment optimized to promote and accelerate protein folding. The chain is Chaperonin GroEL from Magnetococcus marinus (strain ATCC BAA-1437 / JCM 17883 / MC-1).